A 149-amino-acid polypeptide reads, in one-letter code: UPF0178 protein Cphy_3042 (149 aa).

A compositionally biased stretch (basic residues) spans Gln-112–Arg-128. The tract at residues Gln-112 to Asp-132 is disordered.

This sequence belongs to the UPF0178 family.

In Lachnoclostridium phytofermentans (strain ATCC 700394 / DSM 18823 / ISDg) (Clostridium phytofermentans), this protein is UPF0178 protein Cphy_3042.